Reading from the N-terminus, the 82-residue chain is MSRKRPQPPVKPFKKKPNPLKAAKVTEIDYKDVALLRKFISDRGKIRSRRITGVTVQEQREISKAIKNAREMALLPYATSGR.

Belongs to the bacterial ribosomal protein bS18 family. As to quaternary structure, part of the 30S ribosomal subunit. Forms a tight heterodimer with protein bS6.

Functionally, binds as a heterodimer with protein bS6 to the central domain of the 16S rRNA, where it helps stabilize the platform of the 30S subunit. The protein is Small ribosomal subunit protein bS18 of Bifidobacterium adolescentis (strain ATCC 15703 / DSM 20083 / NCTC 11814 / E194a).